A 192-amino-acid polypeptide reads, in one-letter code: Protein GrpE (192 aa).

It belongs to the GrpE family. As to quaternary structure, homodimer.

It localises to the cytoplasm. Its function is as follows. Participates actively in the response to hyperosmotic and heat shock by preventing the aggregation of stress-denatured proteins, in association with DnaK and GrpE. It is the nucleotide exchange factor for DnaK and may function as a thermosensor. Unfolded proteins bind initially to DnaJ; upon interaction with the DnaJ-bound protein, DnaK hydrolyzes its bound ATP, resulting in the formation of a stable complex. GrpE releases ADP from DnaK; ATP binding to DnaK triggers the release of the substrate protein, thus completing the reaction cycle. Several rounds of ATP-dependent interactions between DnaJ, DnaK and GrpE are required for fully efficient folding. This is Protein GrpE from Neisseria gonorrhoeae (strain ATCC 700825 / FA 1090).